The primary structure comprises 203 residues: Outer-membrane lipoprotein carrier protein (203 aa).

The signal sequence occupies residues 1-21 (MKKMAIACALLSSVVASSVWA). The segment at 178–203 (QQNGAVEPSKFTFTPPQGVTIDDQRK) is disordered.

This sequence belongs to the LolA family. In terms of assembly, monomer.

The protein localises to the periplasm. Its function is as follows. Participates in the translocation of lipoproteins from the inner membrane to the outer membrane. Only forms a complex with a lipoprotein if the residue after the N-terminal Cys is not an aspartate (The Asp acts as a targeting signal to indicate that the lipoprotein should stay in the inner membrane). This is Outer-membrane lipoprotein carrier protein from Salmonella typhi.